Reading from the N-terminus, the 946-residue chain is Inositol-trisphosphate 3-kinase B (946 aa).

Disordered regions lie at residues 19–128 (EMKS…EEAK), 156–288 (AQSS…TRSC), 308–472 (ARVT…GIPS), 486–561 (KDLK…RKAC), and 580–638 (GALE…HTLD). Phosphoserine occurs at positions 43, 49, and 71. Residues 83-105 (NSSSGSGSGSSGSSVSSPSWAGR) show a composition bias toward low complexity. Residues Ser-204 and Ser-269 each carry the phosphoserine modification. Positions 396 to 411 (TTVSVQSAESSDSLSW) are enriched in polar residues. The segment covering 445-458 (GGSPTLGLLGGSPS) has biased composition (low complexity). The span at 524–534 (TGVQSEGTWES) shows a compositional bias: polar residues. Residues 599–612 (SSSSASSTGFSSSY) show a composition bias toward low complexity. Residues Ser-679, Lys-690, 730–732 (DDL), and Asp-743 contribute to the ATP site. Residues Lys-745 and Arg-766 each coordinate substrate. Positions 768–776 (DMYQKMIEV) are calmodulin-binding. Substrate is bound at residue 793-800 (KPRYMQWR). ATP-binding residues include Lys-817 and Asp-897. Residue Lys-900 coordinates substrate.

Belongs to the inositol phosphokinase (IPK) family. As to quaternary structure, interacts with DMTN.

The protein resides in the cytoplasm. It localises to the cytoskeleton. Its subcellular location is the endoplasmic reticulum. The catalysed reaction is 1D-myo-inositol 1,4,5-trisphosphate + ATP = 1D-myo-inositol 1,3,4,5-tetrakisphosphate + ADP + H(+). Its activity is regulated as follows. IP3K is activated by calcium and calmodulin. Form B is much more sensitive to calcium/calmodulin than form A. Functionally, catalyzes the phosphorylation of 1D-myo-inositol 1,4,5-trisphosphate (InsP3) into 1D-myo-inositol 1,3,4,5-tetrakisphosphate and participates to the regulation of calcium homeostasis. The polypeptide is Inositol-trisphosphate 3-kinase B (Homo sapiens (Human)).